Here is a 267-residue protein sequence, read N- to C-terminus: Type II pantothenate kinase (267 aa).

6-13 is an ATP binding site; the sequence is DAGGTLIK. The active-site Proton acceptor is the Glu70. ATP-binding positions include Thr99, 121–125, Tyr137, and Ser225; that span reads GGMIQ.

It belongs to the type II pantothenate kinase family. In terms of assembly, homodimer.

Its subcellular location is the cytoplasm. The enzyme catalyses (R)-pantothenate + ATP = (R)-4'-phosphopantothenate + ADP + H(+). It participates in cofactor biosynthesis; coenzyme A biosynthesis; CoA from (R)-pantothenate: step 1/5. In terms of biological role, catalyzes the phosphorylation of pantothenate (Pan), the first step in CoA biosynthesis. The sequence is that of Type II pantothenate kinase from Staphylococcus aureus (strain USA300).